The primary structure comprises 226 residues: Beta-phosphoglucomutase (226 aa).

Asp-7 acts as the Nucleophile in catalysis. Mg(2+) is bound by residues Asp-7 and Asp-9. Asp-7 is modified (4-aspartylphosphate). Asp-9 serves as the catalytic Proton donor/acceptor. Beta-D-glucose 6-phosphate-binding residues include Asp-9, Gly-44, Ile-45, Arg-47, Ser-116, Arg-117, and Asn-118. Asp-170 provides a ligand contact to Mg(2+).

The protein belongs to the HAD-like hydrolase superfamily. CbbY/CbbZ/Gph/YieH family. In terms of assembly, homodimer. The cofactor is Mg(2+). Autophosphorylated.

It localises to the cytoplasm. The enzyme catalyses beta-D-glucose 1-phosphate = beta-D-glucose 6-phosphate. Its function is as follows. Catalyzes the interconversion of D-glucose 1-phosphate (G1P) and D-glucose 6-phosphate (G6P), forming beta-D-glucose 1,6-(bis)phosphate (beta-G16P) as an intermediate. The sequence is that of Beta-phosphoglucomutase (yvdM) from Bacillus subtilis (strain 168).